Reading from the N-terminus, the 423-residue chain is WD repeat and SOCS box-containing protein 1 (423 aa).

The tract at residues 76–100 (DRSSGAGPRRLSRQNSEGSLLPGEP) is disordered. 5 WD repeats span residues 125-166 (SRCV…LLLN), 169-209 (DHTD…NMVK), 213-252 (GHQNWVYCSAFSPDSSVLCSVGAGKAVFLWDMDKYTLIRK), 255-294 (GHHNDVVCCEFSPDGALLATASYDTRVIVWDPHTATVLLE), and 310-347 (ANDRWVRSVAFCHDGRHIASVTDDRLVRFWSIDEKSPQ). Positions 373–423 (DGSVHFWASPRSIASLQHLCRMTLRRVMPTQQVYTLPIPFSMQDYLAYKTL) constitute an SOCS box domain.

In terms of assembly, component of a probable ECS E3 ubiquitin-protein ligase complex that contains the Elongin BC complex.

It functions in the pathway protein modification; protein ubiquitination. Functionally, probable substrate-recognition component of a SCF-like ECS (Elongin-Cullin-SOCS-box protein) E3 ubiquitin-protein ligase complex which mediates the ubiquitination and subsequent proteasomal degradation of target proteins. This is WD repeat and SOCS box-containing protein 1 (wsb1) from Danio rerio (Zebrafish).